Consider the following 356-residue polypeptide: S-adenosylmethionine:tRNA ribosyltransferase-isomerase (356 aa).

Belongs to the QueA family. Monomer.

The protein localises to the cytoplasm. The enzyme catalyses 7-aminomethyl-7-carbaguanosine(34) in tRNA + S-adenosyl-L-methionine = epoxyqueuosine(34) in tRNA + adenine + L-methionine + 2 H(+). The protein operates within tRNA modification; tRNA-queuosine biosynthesis. Its function is as follows. Transfers and isomerizes the ribose moiety from AdoMet to the 7-aminomethyl group of 7-deazaguanine (preQ1-tRNA) to give epoxyqueuosine (oQ-tRNA). In Histophilus somni (strain 2336) (Haemophilus somnus), this protein is S-adenosylmethionine:tRNA ribosyltransferase-isomerase.